A 473-amino-acid polypeptide reads, in one-letter code: Photosystem II CP43 reaction center protein (473 aa).

Positions 1–14 (MKTLYSLRRFYHVE) are excised as a propeptide. Residue Thr-15 is modified to N-acetylthreonine. Phosphothreonine is present on Thr-15. The next 5 helical transmembrane spans lie at 69–93 (LFEV…PHLA), 134–155 (LLGP…KDRN), 178–200 (KALY…RKIT), 255–275 (KPFA…LSYS), and 291–312 (WFNN…ASQA). Glu-367 contacts [CaMn4O5] cluster. A helical transmembrane segment spans residues 447-471 (RARAAAAGFEKGIDRDFEPVLSMTP).

The protein belongs to the PsbB/PsbC family. PsbC subfamily. In terms of assembly, PSII is composed of 1 copy each of membrane proteins PsbA, PsbB, PsbC, PsbD, PsbE, PsbF, PsbH, PsbI, PsbJ, PsbK, PsbL, PsbM, PsbT, PsbX, PsbY, PsbZ, Psb30/Ycf12, at least 3 peripheral proteins of the oxygen-evolving complex and a large number of cofactors. It forms dimeric complexes. The cofactor is Binds multiple chlorophylls and provides some of the ligands for the Ca-4Mn-5O cluster of the oxygen-evolving complex. It may also provide a ligand for a Cl- that is required for oxygen evolution. PSII binds additional chlorophylls, carotenoids and specific lipids..

It localises to the plastid. The protein resides in the chloroplast thylakoid membrane. In terms of biological role, one of the components of the core complex of photosystem II (PSII). It binds chlorophyll and helps catalyze the primary light-induced photochemical processes of PSII. PSII is a light-driven water:plastoquinone oxidoreductase, using light energy to abstract electrons from H(2)O, generating O(2) and a proton gradient subsequently used for ATP formation. In Ipomoea purpurea (Common morning glory), this protein is Photosystem II CP43 reaction center protein.